A 282-amino-acid polypeptide reads, in one-letter code: MATYLIGDVHGCYDELIALLHKVEFTPGKDTLWLTGDLVARGPGSLDVLRYVKSLGDSVRLVLGNHDLHLLAVFAGISRNKPKDRLTPLLEAPDADELLNWLRRQPLLQIDEEKKLVMAHAGITPQWDLQTAKECARDVEAVLSSDSYPFFLDAMYGDMPNNWSPELRGLGRLRFITNAFTRMRFCFPNGQLDMYSKESPEEAPAPLKPWFAIPGPVAEEYSIAFGHWASLEGKGTPEGIYALDTGCCWGGTLTCLRWEDKQYFVQPSNRHKDMGEGEAAAS.

This sequence belongs to the Ap4A hydrolase family.

It carries out the reaction P(1),P(4)-bis(5'-adenosyl) tetraphosphate + H2O = 2 ADP + 2 H(+). Functionally, hydrolyzes diadenosine 5',5'''-P1,P4-tetraphosphate to yield ADP. This is Bis(5'-nucleosyl)-tetraphosphatase, symmetrical from Escherichia coli O7:K1 (strain IAI39 / ExPEC).